Here is an 833-residue protein sequence, read N- to C-terminus: Heat shock transcription factor (833 aa).

Met1 carries the post-translational modification N-acetylmethionine. The span at Met1 to Ser16 shows a compositional bias: polar residues. Disordered regions lie at residues Met1–Asp31 and Asn62–Leu92. Residues Ser69–Phe80 are compositionally biased toward low complexity. The residue at position 97 (Thr97) is a Phosphothreonine. Over residues Pro150–Gln161 the composition is skewed to polar residues. Disordered regions lie at residues Pro150–Lys170 and Gly277–Asn309. The DNA-binding element occupies Lys170–Glu259. Residues Asn260 to Asn280 are flexible linker. A compositionally biased stretch (low complexity) spans Gly277–Asn296. The tract at residues Glu350–Ile403 is involved in trimerization. Residues Ser447–Asn457 are compositionally biased toward basic and acidic residues. Residues Ser447–Ile493 form a disordered region. Phosphoserine occurs at positions 450, 458, 471, 478, and 528. Residues Ser458–Thr487 show a composition bias toward polar residues. The segment covering Arg542–Leu554 has biased composition (polar residues). Disordered stretches follow at residues Arg542–Ser626, Gly657–Pro765, and Ser778–Asn799. The span at Pro571–Thr580 shows a compositional bias: acidic residues. Residues Arg588–Asp600 are compositionally biased toward polar residues. Residues Asp610–Ser626 show a composition bias toward basic and acidic residues. Low complexity predominate over residues Asn660–Asn675. Polar residues predominate over residues Met676–Phe687. Positions Ser697 to Ser713 are enriched in low complexity. Composition is skewed to polar residues over residues Ala727–Gly739, Asn752–Val763, and Ser778–Asp794.

This sequence belongs to the HSF family. As to quaternary structure, homotrimer. Homotrimerization increases the affinity of HSF1 to DNA. Exhibits temperature-dependent phosphorylation that activates the transcriptional capacity.

It localises to the nucleus. In terms of biological role, DNA-binding transcription factor that specifically binds heat shock promoter elements (HSE) and activates transcription. The protein is Heat shock transcription factor of Saccharomyces cerevisiae (strain ATCC 204508 / S288c) (Baker's yeast).